The chain runs to 144 residues: Methylglyoxal synthase (144 aa).

The region spanning 1 to 144 (MNIALIAHDE…EEEQRKFLTD (144 aa)) is the MGS-like domain. Substrate is bound by residues histidine 8, lysine 12, 34–37 (TGTT), and 54–55 (SG). The Proton donor/acceptor role is filled by aspartate 60. Position 87 (histidine 87) interacts with substrate.

Belongs to the methylglyoxal synthase family.

The catalysed reaction is dihydroxyacetone phosphate = methylglyoxal + phosphate. In terms of biological role, catalyzes the formation of methylglyoxal from dihydroxyacetone phosphate. The chain is Methylglyoxal synthase from Exiguobacterium sibiricum (strain DSM 17290 / CCUG 55495 / CIP 109462 / JCM 13490 / 255-15).